The chain runs to 363 residues: 3-isopropylmalate dehydrogenase (363 aa).

78-91 (GPKWENLPPESQPE) contributes to the NAD(+) binding site. 4 residues coordinate substrate: Arg-99, Arg-109, Arg-138, and Asp-227. Mg(2+) contacts are provided by Asp-227, Asp-251, and Asp-255. 285–297 (GSAPDIAGKNIAN) provides a ligand contact to NAD(+).

This sequence belongs to the isocitrate and isopropylmalate dehydrogenases family. LeuB type 1 subfamily. As to quaternary structure, homodimer. Mg(2+) is required as a cofactor. Mn(2+) serves as cofactor.

The protein localises to the cytoplasm. The catalysed reaction is (2R,3S)-3-isopropylmalate + NAD(+) = 4-methyl-2-oxopentanoate + CO2 + NADH. It participates in amino-acid biosynthesis; L-leucine biosynthesis; L-leucine from 3-methyl-2-oxobutanoate: step 3/4. In terms of biological role, catalyzes the oxidation of 3-carboxy-2-hydroxy-4-methylpentanoate (3-isopropylmalate) to 3-carboxy-4-methyl-2-oxopentanoate. The product decarboxylates to 4-methyl-2 oxopentanoate. The polypeptide is 3-isopropylmalate dehydrogenase (Salmonella typhi).